The sequence spans 333 residues: 2-haloacrylate reductase (333 aa).

An NADP(+)-binding site is contributed by 153–159 (AAAGGMG).

The protein belongs to the zinc-containing alcohol dehydrogenase family.

The catalysed reaction is (S)-2-chloropropanoate + NADP(+) = 2-chloroacrylate + NADPH + H(+). Functionally, involved in the degradation of unsaturated organohalogen compounds. Catalyzes the NADPH-dependent reduction of the carbon-carbon double bond of 2-chloroacrylate to produce (S)-2-chloropropionate, which is probably further metabolized to (R)-lactate by (S)-2-haloacid dehalogenase. Can also use 2-bromoacrylate as substrate. Does not act on acrylate, methacrylate, 1,4-benzoquinone and 1,4-naphthoquinone. This chain is 2-haloacrylate reductase, found in Burkholderia sp.